The following is a 105-amino-acid chain: Cell division protein FtsL (105 aa).

Residues methionine 1–lysine 22 are Cytoplasmic-facing. A helical transmembrane segment spans residues isoleucine 23–histidine 43. The Periplasmic segment spans residues arginine 44 to lysine 105.

This sequence belongs to the FtsL family. As to quaternary structure, part of a complex composed of FtsB, FtsL and FtsQ.

Its subcellular location is the cell inner membrane. Essential cell division protein. May link together the upstream cell division proteins, which are predominantly cytoplasmic, with the downstream cell division proteins, which are predominantly periplasmic. The chain is Cell division protein FtsL from Yersinia pestis.